Here is a 304-residue protein sequence, read N- to C-terminus: MAGPDIEAVKSYLLDLQESICNALETEEPRARFVEDRWEHAAGGGGRTRVLSGGETFEQGGVNFSHVRGASLPASATAHRPELAGRGFQATGVSLVIHPLNPYVPTSHANVRFFLAEKEGETPIWWFGGGFDLTPFYPFEEDVIHWHRTARNACLPFGEDVYPRFKRWCDEYFFLNHRNETRGVGGLFFDDLNEWGFERSFAFLRSVGDHYLKAYLPIVQRRKAIPYGEREREFQLYRRGRYVEFNLVYDRGTLFGLQSGGRTESILMSLPPVAHWRYDWRPERGSAEENLYLNYLKPKEWLES.

Substrate is bound at residue Ser94. A divalent metal cation contacts are provided by His98 and His108. His108 (proton donor) is an active-site residue. 110-112 (NVR) contacts substrate. A divalent metal cation contacts are provided by His147 and His177. The tract at residues 242–277 (YVEFNLVYDRGTLFGLQSGGRTESILMSLPPVAHWR) is important for dimerization. 260–262 (GGR) contacts substrate.

This sequence belongs to the aerobic coproporphyrinogen-III oxidase family. As to quaternary structure, homodimer. A divalent metal cation serves as cofactor.

The protein localises to the cytoplasm. It catalyses the reaction coproporphyrinogen III + O2 + 2 H(+) = protoporphyrinogen IX + 2 CO2 + 2 H2O. Its pathway is porphyrin-containing compound metabolism; protoporphyrin-IX biosynthesis; protoporphyrinogen-IX from coproporphyrinogen-III (O2 route): step 1/1. Its function is as follows. Involved in the heme biosynthesis. Catalyzes the aerobic oxidative decarboxylation of propionate groups of rings A and B of coproporphyrinogen-III to yield the vinyl groups in protoporphyrinogen-IX. The chain is Oxygen-dependent coproporphyrinogen-III oxidase from Methylococcus capsulatus (strain ATCC 33009 / NCIMB 11132 / Bath).